The sequence spans 355 residues: Thiamine thiazole synthase, chloroplastic (355 aa).

A chloroplast-targeting transit peptide spans 1–42 (MAAMATTASSLLKTSFAGARLPAAARNPTVSVAPRTGGAICN). Residues alanine 96, 116 to 117 (EQ), glycine 124, and valine 189 each bind substrate. Cysteine 218 is subject to 2,3-didehydroalanine (Cys). Residues aspartate 220, histidine 235, methionine 287, and 297 to 299 (RMG) contribute to the substrate site.

It belongs to the THI4 family. As to quaternary structure, homooctamer. Requires Fe cation as cofactor. In terms of processing, during the catalytic reaction, a sulfide is transferred from Cys-218 to a reaction intermediate, generating a dehydroalanine residue.

Its subcellular location is the plastid. It localises to the chloroplast. It catalyses the reaction [ADP-thiazole synthase]-L-cysteine + glycine + NAD(+) = [ADP-thiazole synthase]-dehydroalanine + ADP-5-ethyl-4-methylthiazole-2-carboxylate + nicotinamide + 3 H2O + 2 H(+). Functionally, involved in biosynthesis of the thiamine precursor thiazole. Catalyzes the conversion of NAD and glycine to adenosine diphosphate 5-(2-hydroxyethyl)-4-methylthiazole-2-carboxylic acid (ADT), an adenylated thiazole intermediate. The reaction includes an iron-dependent sulfide transfer from a conserved cysteine residue of the protein to a thiazole intermediate. The enzyme can only undergo a single turnover, which suggests it is a suicide enzyme. May have additional roles in adaptation to various stress conditions and in DNA damage tolerance. Required fot thiamine accumulation and disease resistance toward the bacterial pathogen Xanthomonas oryzae pv oryzae (Xoo) and the fungal pathogen Magnaporthe oryzae. During infection by Xoo, functions positively in the defense pathway initiated by the resistance genes XA3 and XA26 by promoting thiamine synthesis. May function upstream of the defense-related proteins peroxidases, phenylalanine ammonia-lyases and pathogenesis-related proteins. Its function is as follows. (Microbial infection) During infection by Xanthomonas oryzae pv oryzae (Xoo), THI1 interacts with the type III effector virulence factor xadA from Xoo, which is an adhesin-like outer membrane protein. This probably attenuates the function of THI1 in defense response. The sequence is that of Thiamine thiazole synthase, chloroplastic from Oryza sativa subsp. japonica (Rice).